The primary structure comprises 89 residues: NAD(P)H-quinone oxidoreductase subunit L (89 aa).

2 consecutive transmembrane segments (helical) span residues 29–46 (VLGG…FYWM) and 59–79 (LFIY…APFL).

The protein belongs to the complex I NdhL subunit family. In terms of assembly, NDH-1 can be composed of about 15 different subunits; different subcomplexes with different compositions have been identified which probably have different functions.

The protein resides in the cellular thylakoid membrane. It catalyses the reaction a plastoquinone + NADH + (n+1) H(+)(in) = a plastoquinol + NAD(+) + n H(+)(out). It carries out the reaction a plastoquinone + NADPH + (n+1) H(+)(in) = a plastoquinol + NADP(+) + n H(+)(out). In terms of biological role, NDH-1 shuttles electrons from an unknown electron donor, via FMN and iron-sulfur (Fe-S) centers, to quinones in the respiratory and/or the photosynthetic chain. The immediate electron acceptor for the enzyme in this species is believed to be plastoquinone. Couples the redox reaction to proton translocation, and thus conserves the redox energy in a proton gradient. Cyanobacterial NDH-1 also plays a role in inorganic carbon-concentration. The protein is NAD(P)H-quinone oxidoreductase subunit L of Prochlorococcus marinus (strain NATL1A).